We begin with the raw amino-acid sequence, 183 residues long: MRGVLRGLAVVVEDVEFGRRLYKEGFYGRFLGYDKVKREEVDRINAPLVLALYEALYLVERGVLEVVTDSGEKITQTRLVELGREKLKNFDEIYKIYKYFRDLGYVVKSGLKFGALFSVYEKGPGIDHAPMVVVFLEPDKGISATDITRGGRLGHSVKKTFTLATVLKNTGEVILLGFSWARL.

Active-site residues include Y120, H128, and K159.

Belongs to the tRNA-intron endonuclease family. Archaeal short subfamily. Homotetramer; although the tetramer contains four active sites, only two participate in the cleavage. Therefore, it should be considered as a dimer of dimers.

It carries out the reaction pretRNA = a 3'-half-tRNA molecule with a 5'-OH end + a 5'-half-tRNA molecule with a 2',3'-cyclic phosphate end + an intron with a 2',3'-cyclic phosphate and a 5'-hydroxyl terminus.. Its function is as follows. Endonuclease that removes tRNA introns. Cleaves pre-tRNA at the 5'- and 3'-splice sites to release the intron. The products are an intron and two tRNA half-molecules bearing 2',3' cyclic phosphate and 5'-OH termini. Recognizes a pseudosymmetric substrate in which 2 bulged loops of 3 bases are separated by a stem of 4 bp. This chain is tRNA-splicing endonuclease, found in Pyrobaculum arsenaticum (strain DSM 13514 / JCM 11321 / PZ6).